The primary structure comprises 260 residues: ATP synthase subunit a (260 aa).

Helical transmembrane passes span 29–49 (FSFT…LLLI), 95–115 (FFPC…QGMI), 124–144 (HFLI…IVGF), 151–171 (FFSF…LVLL), 191–211 (MMAG…MLCM), 213–233 (EIFY…LTGL), and 237–257 (VAIL…NDAI).

This sequence belongs to the ATPase A chain family. F-type ATPases have 2 components, CF(1) - the catalytic core - and CF(0) - the membrane proton channel. CF(1) has five subunits: alpha(3), beta(3), gamma(1), delta(1), epsilon(1). CF(0) has three main subunits: a, b and c.

The protein localises to the mitochondrion inner membrane. Its function is as follows. Mitochondrial membrane ATP synthase (F(1)F(0) ATP synthase or Complex V) produces ATP from ADP in the presence of a proton gradient across the membrane which is generated by electron transport complexes of the respiratory chain. F-type ATPases consist of two structural domains, F(1) - containing the extramembraneous catalytic core and F(0) - containing the membrane proton channel, linked together by a central stalk and a peripheral stalk. During catalysis, ATP synthesis in the catalytic domain of F(1) is coupled via a rotary mechanism of the central stalk subunits to proton translocation. Key component of the proton channel; it may play a direct role in the translocation of protons across the membrane. The chain is ATP synthase subunit a (ATP6) from Brassica napus (Rape).